The following is a 213-amino-acid chain: Adenylate kinase (213 aa).

An ATP-binding site is contributed by 10-15 (GSGKGT). Residues 30–59 (SVGDLLRNIISSESKLGKGIKDTVESGNLI) are NMP. AMP contacts are provided by residues Arg-36, 57–59 (NLI), 83–86 (GFPR), and Gln-90. The segment at 125-160 (DRLTCLDCKSIYSISSFKNTTCAKCKSTRLEKRIDD) is LID. Residue Arg-126 coordinates ATP. Residues Cys-129 and Cys-132 each contribute to the Zn(2+) site. An ATP-binding site is contributed by 135–136 (IY). The Zn(2+) site is built by Cys-146 and Cys-149. Residues Arg-157 and Arg-169 each contribute to the AMP site. Residue Leu-195 participates in ATP binding.

The protein belongs to the adenylate kinase family. Monomer.

The protein resides in the cytoplasm. It carries out the reaction AMP + ATP = 2 ADP. Its pathway is purine metabolism; AMP biosynthesis via salvage pathway; AMP from ADP: step 1/1. Its function is as follows. Catalyzes the reversible transfer of the terminal phosphate group between ATP and AMP. Plays an important role in cellular energy homeostasis and in adenine nucleotide metabolism. The chain is Adenylate kinase from Wolbachia pipientis subsp. Culex pipiens (strain wPip).